A 193-amino-acid polypeptide reads, in one-letter code: Inner membrane-spanning protein YciB (193 aa).

A run of 6 helical transmembrane segments spans residues 5–25 (TLDAIKPFLDWIPLIVFFYIY), 36–56 (IIAATTGLLIATLIVYGLMFV), 67–87 (WLVVVLTVVFGGLTMAFQDDF), 93–113 (APIINAVFAFGLAMSPLFLGG), 138–158 (VWVGFFTLMAVLQALFAFVWV), and 164–184 (FTAFGDMIVMVVFMVAQFWFL).

The protein belongs to the YciB family.

Its subcellular location is the cell inner membrane. Its function is as follows. Plays a role in cell envelope biogenesis, maintenance of cell envelope integrity and membrane homeostasis. The chain is Inner membrane-spanning protein YciB from Vitreoscilla sp. (strain C1).